The sequence spans 126 residues: Glycine cleavage system H protein (126 aa).

Positions 22 to 104 constitute a Lipoyl-binding domain; that stretch reads VATVGITEYA…YEKAWMVKIE (83 aa). Lys63 is subject to N6-lipoyllysine.

This sequence belongs to the GcvH family. The glycine cleavage system is composed of four proteins: P, T, L and H. It depends on (R)-lipoate as a cofactor.

The glycine cleavage system catalyzes the degradation of glycine. The H protein shuttles the methylamine group of glycine from the P protein to the T protein. Functionally, is also involved in protein lipoylation via its role as an octanoyl/lipoyl carrier protein intermediate. This chain is Glycine cleavage system H protein, found in Staphylococcus epidermidis (strain ATCC 12228 / FDA PCI 1200).